Here is a 94-residue protein sequence, read N- to C-terminus: Lipolysis-activating peptide 1-beta chain (94 aa).

Residues 1-19 form the signal peptide; sequence MKILAVVLISVIVLNTANG. Residues 20-87 enclose the LCN-type CS-alpha/beta domain; that stretch reads ENYYPQKYTN…FFNALESQCP (68 aa). 3 disulfides stabilise this stretch: Cys-34-Cys-56, Cys-42-Cys-66, and Cys-46-Cys-68.

The protein belongs to the long (3 C-C) scorpion toxin superfamily. In terms of assembly, homodimer; disulfide-linked or monomer (edited version) or heterodimer of an alpha chain (AC D9U299 or AC D9U2A4) and this beta chain (non-edited version). As to expression, expressed by the venom gland.

It is found in the secreted. Its function is as follows. The homodimer inhibits HMG-CoA reductase (HMGCR) (32% of inhibition produced by 0.6 uM), a glycoprotein involved in the control of cholesterol biosynthesis. The inhibitory effects of bumarsin are seen at much lower concentrations (0.6 uM) than that for statins such as atorvastatin (5 mM) and simvastatin (10 uM). In addition to inhibition of HMG-CoA reductase, this protein lowers cholesterol levels by inducing steroid hormone synthesis via StAR, and by increasing reverse cholesterol transport mediated by the induction of ABCA1 and APOA1. Functionally, the heterodimer non-edited LVP1 induces lipolysis in rat adipocytes. Induction of lipolysis by LVP1 appears to be mediated through the beta-2 adrenergic receptor pathway (ADRB2). The monomer edited version, similar to alpha-toxins, may modulate voltage-gated sodium channels (Nav) and may block voltage-gated potassium channels (Kv). The sequence is that of Lipolysis-activating peptide 1-beta chain from Lychas mucronatus (Chinese swimming scorpion).